The following is a 100-amino-acid chain: Small ribosomal subunit protein uS14c (100 aa).

Belongs to the universal ribosomal protein uS14 family. Part of the 30S ribosomal subunit.

It is found in the plastid. Its subcellular location is the chloroplast. Functionally, binds 16S rRNA, required for the assembly of 30S particles. This chain is Small ribosomal subunit protein uS14c, found in Cyanidioschyzon merolae (strain NIES-3377 / 10D) (Unicellular red alga).